The chain runs to 412 residues: Probable serine/threonine-protein kinase PBL10 (412 aa).

The N-myristoyl glycine moiety is linked to residue G2. C4 carries S-palmitoyl cysteine lipidation. Residues 15–45 (GASPKYMSSEANDSLGSKSSSVSIRTNPRTE) form a disordered region. The segment covering 23–43 (SEANDSLGSKSSSVSIRTNPR) has biased composition (polar residues). Position 58 is a phosphothreonine (T58). The region spanning 69 to 356 (FRPDSVLGEG…VVSHLEHIQT (288 aa)) is the Protein kinase domain. ATP is bound by residues 75–83 (LGEGGFGSV) and K107. At Y152 the chain carries Phosphotyrosine. D204 functions as the Proton acceptor in the catalytic mechanism. S208 and S238 each carry phosphoserine. Phosphothreonine is present on residues T239 and T244. A Phosphotyrosine modification is found at Y252.

The protein belongs to the protein kinase superfamily. Ser/Thr protein kinase family. In terms of assembly, interacts with the Xanthomonas campestris effector XopAC/AvrAC. In terms of tissue distribution, expressed in stomatal guard cells of leaves.

It localises to the cell membrane. The catalysed reaction is L-seryl-[protein] + ATP = O-phospho-L-seryl-[protein] + ADP + H(+). The enzyme catalyses L-threonyl-[protein] + ATP = O-phospho-L-threonyl-[protein] + ADP + H(+). Possible bi-functional kinase. In vitro, it exhibits serine/threonine activity. In vivo, can phosphorylate tyrosine residues of limited substrates. May be involved in plant defense signaling. Required for full light-induced stomatal opening. The polypeptide is Probable serine/threonine-protein kinase PBL10 (Arabidopsis thaliana (Mouse-ear cress)).